Reading from the N-terminus, the 341-residue chain is Phenylalanine--tRNA ligase alpha subunit (341 aa).

Glu254 is a Mg(2+) binding site.

This sequence belongs to the class-II aminoacyl-tRNA synthetase family. Phe-tRNA synthetase alpha subunit type 1 subfamily. In terms of assembly, tetramer of two alpha and two beta subunits. Mg(2+) is required as a cofactor.

The protein resides in the cytoplasm. The catalysed reaction is tRNA(Phe) + L-phenylalanine + ATP = L-phenylalanyl-tRNA(Phe) + AMP + diphosphate + H(+). This is Phenylalanine--tRNA ligase alpha subunit from Chlorobaculum tepidum (strain ATCC 49652 / DSM 12025 / NBRC 103806 / TLS) (Chlorobium tepidum).